The sequence spans 397 residues: Acetyl-CoA acetyltransferase, cytosolic (397 aa).

M1 is modified (N-acetylmethionine). C92 functions as the Acyl-thioester intermediate in the catalytic mechanism. K200 is modified (N6-acetyllysine). The CoA site is built by R223 and S226. N6-acetyllysine is present on residues K233 and K235. Residue S252 coordinates CoA. The active-site Proton donor/acceptor is C383.

It belongs to the thiolase-like superfamily. Thiolase family. In terms of assembly, homotetramer.

The protein resides in the cytoplasm. It is found in the cytosol. It carries out the reaction 2 acetyl-CoA = acetoacetyl-CoA + CoA. It participates in lipid metabolism; fatty acid metabolism. In terms of biological role, involved in the biosynthetic pathway of cholesterol. In Homo sapiens (Human), this protein is Acetyl-CoA acetyltransferase, cytosolic (ACAT2).